Reading from the N-terminus, the 736-residue chain is Probable potassium transport system protein Kup 2 (736 aa).

Transmembrane regions (helical) follow at residues 1-21, 42-62, 84-104, 126-146, 156-176, 204-224, 239-259, 287-307, 334-354, 364-384, 390-410, and 414-434; these read MAIVALGVVYGDIGTSPLYTA, MLSLVFWSITLITTVKYVLIA, GAWLAIPAMLGGAAFLADSVL, LFDENPSLTLMITVVIIVILF, IGKVFGSMVLVWFGFLAIVGV, AAGIALMGTVFLSTTGAEALY, WPFIKVALVLNYFGQGAWMLA, AVILSVSAGVIASQALITGAF, LYIPVVNGVLCVSTLAVLAIF, YGLALTITMITTTVLLGVYLW, VGAIVFTVLFLAIQAMFFIAS, and FLHGGWFTMLLTAAILFVMYT. Disordered stretches follow at residues 649-678 and 693-736; these read TDTAKTIPTPTPTRAVADPAAVPDPMDTTS and AEAR…KQKR. 2 stretches are compositionally biased toward low complexity: residues 660 to 677 and 700 to 709; these read PTRAVADPAAVPDPMDTT and EAAAADAPAE. Residues 710–721 show a composition bias toward basic and acidic residues; that stretch reads QGDKGDKGKAEN.

Belongs to the HAK/KUP transporter (TC 2.A.72) family.

Its subcellular location is the cell membrane. It catalyses the reaction K(+)(in) + H(+)(in) = K(+)(out) + H(+)(out). Its function is as follows. Transport of potassium into the cell. Likely operates as a K(+):H(+) symporter. This Bifidobacterium longum (strain NCC 2705) protein is Probable potassium transport system protein Kup 2.